Consider the following 38-residue polypeptide: Photosystem II reaction center protein L (38 aa).

A helical membrane pass occupies residues 17–37; the sequence is SLYWGLLLIFVLAVLFSNYFF.

The protein belongs to the PsbL family. In terms of assembly, PSII is composed of 1 copy each of membrane proteins PsbA, PsbB, PsbC, PsbD, PsbE, PsbF, PsbH, PsbI, PsbJ, PsbK, PsbL, PsbM, PsbT, PsbX, PsbY, PsbZ, Psb30/Ycf12, at least 3 peripheral proteins of the oxygen-evolving complex and a large number of cofactors. It forms dimeric complexes.

The protein resides in the plastid. The protein localises to the chloroplast thylakoid membrane. One of the components of the core complex of photosystem II (PSII). PSII is a light-driven water:plastoquinone oxidoreductase that uses light energy to abstract electrons from H(2)O, generating O(2) and a proton gradient subsequently used for ATP formation. It consists of a core antenna complex that captures photons, and an electron transfer chain that converts photonic excitation into a charge separation. This subunit is found at the monomer-monomer interface and is required for correct PSII assembly and/or dimerization. The polypeptide is Photosystem II reaction center protein L (Huperzia lucidula (Shining clubmoss)).